Here is a 65-residue protein sequence, read N- to C-terminus: Large ribosomal subunit protein uL29 (65 aa).

This sequence belongs to the universal ribosomal protein uL29 family.

In Bacteroides fragilis (strain ATCC 25285 / DSM 2151 / CCUG 4856 / JCM 11019 / LMG 10263 / NCTC 9343 / Onslow / VPI 2553 / EN-2), this protein is Large ribosomal subunit protein uL29.